Consider the following 1379-residue polypeptide: MAQTQTFNGRRRVRKFFGKIPEVAEMPNLIEVQKASYDQFLMVEEPQGGRPDEGLQAVFKSVFPISDFAGTAMLEFVKYEFEAPKFDTEECRQRDLTYAAPLKVTLRLIVFDIDEDTGSKSIKDIKEQDVYMGDMPLMTDNGTFIINGTERVIVSQMHRSPGVFFDHDKGKSHSSGKLLFAARVIPYRGSWLDIEFDAKDIVYARIDRRRKIPVTSLLMALGMDGEEILSTFYNKLTFIRDGDNWRVPFSAERFRGMKATADIIDADTGEVVLEAGKKMTARMARQLADKGLKAIRATEDDLLGNYLAEDIVNMKTGEIFLEAGDEIDEKTLKILLETAGNEVKFLDIDHVNIGGYIRNTLVADKNESRQDALFDIYRVMRPGEPPTLETAEAMFHSLFFDAERYDLSAVGRVKMNMRLELDCPDTVRVLRSEDMVAVVRTLVELRDGKGEIDDIDNLGNRRVRSVGELMENQYRLGLLRMERAIKERMSSIEIDTVMPQDLINAKPAAAAVREFFGSSQLSQFMDQTNPLSEITHKRRLSALGPGGLTRERAGFEVRDVHPTHYGRICPIETPEGPNIGLINSLATFARVNKYGFIETPYRKIVDGKVTEEVVYLSAMEEAKHYVAQANATIDENGGFADEFVVCRHAGEVIMAPRENVDLMDVSPKQLVSVAAALIPFLENDDANRALMGSNMQRQAVPLVRAEAPFVGTGMEPVVARDSGAAIAARRTGVVDQVDATRIVIRATEDVDASQSGVDIYRLQKFQRSNQNTCINQRPLVRVGDLINKGDIIADGPSTDLGDLALGRNVLVAFMPWNGYNYEDSILLSERIVRDDIFTSIHIEEFEVMARDTKLGPEEITRDIPNVSEEALKNLDEAGIVYIGAEVQPGDILVGKITPKGESPMTPEEKLLRAIFGEKASDVRDTSMRMPPGTYGTVVEVRVFNRHGVEKDERAMAIEREEIERLAKDRDDEQSILDRNVYARLSEMLIGKEAIAGPKGFKKGGALTKELLGEYPRSQWWQFAVEDEKLQSELEALRAQYDESKNALQQRFMDKVEKVQRGDEMPPGVMKMVKVFVAVKRKMQPGDKMAGRHGNKGVVSRIVPIEDMPFLEDGTHVDIVLNPLGVPSRMNVGQILETHLGWACAGMGRQIGELIDAYKEAGDIKPLRAKIESLIPDNDRNEPVRQYDDESVVRLSEQLRRGVSIATPVFDGAHESDINEMLEEAGLNSSGQVTLYDGRTGEEFDRKVTVGYIYMLKLHHLVDDKIHARSIGPYSLVTQQPLGGKAQFGGQRFGEMEVWALEAYGAAYTLQEMLTVKSDDVAGRTKVYEAIVRGDDTFEAGIPESFNVLVKEMRSLGLNVELENSSRFDTPPAQLPEAAE.

This sequence belongs to the RNA polymerase beta chain family. The RNAP catalytic core consists of 2 alpha, 1 beta, 1 beta' and 1 omega subunit. When a sigma factor is associated with the core the holoenzyme is formed, which can initiate transcription.

The enzyme catalyses RNA(n) + a ribonucleoside 5'-triphosphate = RNA(n+1) + diphosphate. Its function is as follows. DNA-dependent RNA polymerase catalyzes the transcription of DNA into RNA using the four ribonucleoside triphosphates as substrates. This chain is DNA-directed RNA polymerase subunit beta, found in Chelativorans sp. (strain BNC1).